The following is a 174-amino-acid chain: Beta-lactoglobulin (174 aa).

The N-terminal stretch at 1-18 is a signal peptide; sequence MKFLLLTVGLTSICAIQA. Disulfide bonds link C79-C172 and C122-C134.

Belongs to the calycin superfamily. Lipocalin family. As to quaternary structure, monomer.

The protein resides in the secreted. Its function is as follows. Lactoglobulin is the primary component of whey, it binds retinol and is probably involved in the transport of that molecule. In Trichosurus vulpecula (Brush-tailed possum), this protein is Beta-lactoglobulin (LGB).